The primary structure comprises 172 residues: Large ribosomal subunit protein uL10 (172 aa).

It belongs to the universal ribosomal protein uL10 family. Part of the ribosomal stalk of the 50S ribosomal subunit. The N-terminus interacts with L11 and the large rRNA to form the base of the stalk. The C-terminus forms an elongated spine to which L12 dimers bind in a sequential fashion forming a multimeric L10(L12)X complex.

Functionally, forms part of the ribosomal stalk, playing a central role in the interaction of the ribosome with GTP-bound translation factors. In Bartonella henselae (strain ATCC 49882 / DSM 28221 / CCUG 30454 / Houston 1) (Rochalimaea henselae), this protein is Large ribosomal subunit protein uL10.